The following is a 299-amino-acid chain: Oxygen-dependent coproporphyrinogen-III oxidase (299 aa).

Ser92 provides a ligand contact to substrate. His96 and His106 together coordinate a divalent metal cation. His106 acts as the Proton donor in catalysis. 108 to 110 contacts substrate; sequence NVR. Positions 145 and 175 each coordinate a divalent metal cation. Positions 240-275 are important for dimerization; the sequence is YVEFNLVWDRGTLFGLQTGGRTESILMSMPPLVRWE. A substrate-binding site is contributed by 258 to 260; that stretch reads GGR.

The protein belongs to the aerobic coproporphyrinogen-III oxidase family. Homodimer. It depends on a divalent metal cation as a cofactor.

It localises to the cytoplasm. The catalysed reaction is coproporphyrinogen III + O2 + 2 H(+) = protoporphyrinogen IX + 2 CO2 + 2 H2O. The protein operates within porphyrin-containing compound metabolism; protoporphyrin-IX biosynthesis; protoporphyrinogen-IX from coproporphyrinogen-III (O2 route): step 1/1. Involved in the heme biosynthesis. Catalyzes the aerobic oxidative decarboxylation of propionate groups of rings A and B of coproporphyrinogen-III to yield the vinyl groups in protoporphyrinogen-IX. The protein is Oxygen-dependent coproporphyrinogen-III oxidase of Salmonella choleraesuis (strain SC-B67).